Consider the following 397-residue polypeptide: Phosphoglycerate kinase (397 aa).

Residues 22–24 (DYN), arginine 38, 61–64 (HLGR), arginine 119, and arginine 152 contribute to the substrate site. ATP-binding positions include lysine 203, glycine 294, glutamate 325, and 351 to 354 (GGDT).

This sequence belongs to the phosphoglycerate kinase family. In terms of assembly, monomer.

The protein localises to the cytoplasm. The enzyme catalyses (2R)-3-phosphoglycerate + ATP = (2R)-3-phospho-glyceroyl phosphate + ADP. It functions in the pathway carbohydrate degradation; glycolysis; pyruvate from D-glyceraldehyde 3-phosphate: step 2/5. In Aquifex aeolicus (strain VF5), this protein is Phosphoglycerate kinase (pgk).